The sequence spans 503 residues: Na(+)-translocating NADH-quinone reductase subunit B (503 aa).

Helical transmembrane passes span 55–75 (MMLVVIALMPTVFVAIWNSGL), 85–105 (PQIMEAFLHISGFTSYFSFVS), 120–142 (IFLPLLFISYAVGGTCEVLFAII), 161–181 (ILPPTIPYWMAALGIAFGVVI), and 186–206 (FGGTGMNILNPALTGRAFLFF). Position 248 is an FMN phosphoryl threonine (Thr-248). 5 helical membrane-spanning segments follow: residues 361 to 381 (TSTVACLLGAGLLLLTGIASW), 387 to 407 (FGLSSLFFAWLFKIISILAAG), 417 to 437 (FFIPVYRHLFIGGLAFGLVFM), 452 to 472 (WFYGAFIGFLTILIRLINPAY), and 475 to 495 (GVMLAILLGNVFAPSFDRIAL).

Belongs to the NqrB/RnfD family. As to quaternary structure, composed of six subunits; NqrA, NqrB, NqrC, NqrD, NqrE and NqrF. The cofactor is FMN.

The protein resides in the cell inner membrane. It catalyses the reaction a ubiquinone + n Na(+)(in) + NADH + H(+) = a ubiquinol + n Na(+)(out) + NAD(+). Its function is as follows. NQR complex catalyzes the reduction of ubiquinone-1 to ubiquinol by two successive reactions, coupled with the transport of Na(+) ions from the cytoplasm to the periplasm. NqrA to NqrE are probably involved in the second step, the conversion of ubisemiquinone to ubiquinol. The protein is Na(+)-translocating NADH-quinone reductase subunit B of Chlamydia muridarum (strain MoPn / Nigg).